The chain runs to 392 residues: uncharacterized protein (392 aa).

The N-terminal 34 residues, 1–34 (MCISSSSLLCGINSLKYASNRVGILIPPFQTASS), are a transit peptide targeting the mitochondrion. 8 helical membrane-spanning segments follow: residues 115–135 (VAIM…WHWD), 150–172 (FRFM…WWTL), 185–205 (LLVN…KFGV), 208–225 (ALSV…VALQ), 277–297 (ATFV…AVYA), 299–319 (AAIF…VYPV), 321–341 (AGIF…LNYE), and 350–370 (AHVS…PAMW). The active-site Nucleophile is the serine 292. The active site involves histidine 351.

The protein belongs to the peptidase S54 family.

The protein localises to the mitochondrion inner membrane. This is an uncharacterized protein from Schizosaccharomyces pombe (strain 972 / ATCC 24843) (Fission yeast).